Consider the following 193-residue polypeptide: Cysteine and glycine-rich protein 2 (193 aa).

The 52-residue stretch at 10–61 folds into the LIM zinc-binding 1 domain; that stretch reads CGACGRTVYHAEEVQCDGRSFHRCCFLCMVCRKNLDSTTVAIHDEEIYCKSC. Positions 64–69 match the Nuclear localization signal motif; sequence KKYGPK. A Glycyl lysine isopeptide (Lys-Gly) (interchain with G-Cter in SUMO2) cross-link involves residue Lys-91. An N6-acetyllysine mark is found at Lys-112 and Lys-131. The region spanning 119 to 170 is the LIM zinc-binding 2 domain; the sequence is CSRCGDSVYAAEKIIGAGKPWHKNCFRCAKCGKSLESTTLTEKEGEIYCKGC. Lys-137 is subject to N6-acetyllysine; alternate. Lys-137 bears the N6-succinyllysine; alternate mark. Position 161 is an N6-acetyllysine (Lys-161).

Interacts with KAT14. The LIM domain 1 is necessary and sufficient for this interaction. Interacts with GLRX3.

It is found in the nucleus. Drastically down-regulated in response to PDGF-BB or cell injury, that promote smooth muscle cell proliferation and dedifferentiation. Seems to play a role in the development of the embryonic vascular system. The chain is Cysteine and glycine-rich protein 2 (Csrp2) from Mus musculus (Mouse).